We begin with the raw amino-acid sequence, 507 residues long: Probable cyclic di-GMP phosphodiesterase PdeG (507 aa).

2 consecutive transmembrane segments (helical) span residues 4-24 (TLIPILVAICLFITGVAILNI) and 217-237 (LIDKGFGILIFILLIACAAAF). In terms of domain architecture, EAL spans 246–500 (SATPEEILRR…DLVKIILSKP (255 aa)).

It localises to the cell membrane. It carries out the reaction 3',3'-c-di-GMP + H2O = 5'-phosphoguanylyl(3'-&gt;5')guanosine + H(+). Functionally, phosphodiesterase (PDE) that catalyzes the hydrolysis of cyclic-di-GMP (c-di-GMP) to 5'-pGpG. This Escherichia coli (strain K12) protein is Probable cyclic di-GMP phosphodiesterase PdeG.